We begin with the raw amino-acid sequence, 252 residues long: Phosphoglycolate phosphatase (252 aa).

Asp13 functions as the Nucleophile in the catalytic mechanism. Mg(2+)-binding residues include Asp13, Asp15, and Asp192.

This sequence belongs to the HAD-like hydrolase superfamily. CbbY/CbbZ/Gph/YieH family. As to quaternary structure, monomer. It depends on Mg(2+) as a cofactor. Chloride is required as a cofactor.

The catalysed reaction is 2-phosphoglycolate + H2O = glycolate + phosphate. Its pathway is organic acid metabolism; glycolate biosynthesis; glycolate from 2-phosphoglycolate: step 1/1. Its function is as follows. Specifically catalyzes the dephosphorylation of 2-phosphoglycolate. Is involved in the dissimilation of the intracellular 2-phosphoglycolate formed during the DNA repair of 3'-phosphoglycolate ends, a major class of DNA lesions induced by oxidative stress. This is Phosphoglycolate phosphatase from Shigella dysenteriae serotype 1 (strain Sd197).